A 366-amino-acid chain; its full sequence is Acetylserotonin O-methyltransferase 2 (366 aa).

S-adenosyl-L-homocysteine-binding residues include glycine 209, aspartate 232, aspartate 253, and lysine 267. Histidine 271 serves as the catalytic Proton acceptor. Active-site residues include glutamate 302 and glutamate 332.

It belongs to the class I-like SAM-binding methyltransferase superfamily. Cation-independent O-methyltransferase family. As to quaternary structure, homodimer. As to expression, expressed in roots, leaves, stems and flowers.

The protein localises to the cytoplasm. It carries out the reaction N-acetylserotonin + S-adenosyl-L-methionine = melatonin + S-adenosyl-L-homocysteine + H(+). The protein operates within aromatic compound metabolism; melatonin biosynthesis; melatonin from serotonin: step 1/2. Methyltransferase which catalyzes the transfer of a methyl group onto N-acetylserotonin, producing melatonin (N-acetyl-5-methoxytryptamine). The polypeptide is Acetylserotonin O-methyltransferase 2 (Oryza sativa subsp. japonica (Rice)).